The sequence spans 408 residues: Tryptophan synthase beta chain (408 aa).

At Lys90 the chain carries N6-(pyridoxal phosphate)lysine.

It belongs to the TrpB family. In terms of assembly, tetramer of two alpha and two beta chains. Requires pyridoxal 5'-phosphate as cofactor.

The enzyme catalyses (1S,2R)-1-C-(indol-3-yl)glycerol 3-phosphate + L-serine = D-glyceraldehyde 3-phosphate + L-tryptophan + H2O. Its pathway is amino-acid biosynthesis; L-tryptophan biosynthesis; L-tryptophan from chorismate: step 5/5. Its function is as follows. The beta subunit is responsible for the synthesis of L-tryptophan from indole and L-serine. This is Tryptophan synthase beta chain from Bacillus licheniformis (strain ATCC 14580 / DSM 13 / JCM 2505 / CCUG 7422 / NBRC 12200 / NCIMB 9375 / NCTC 10341 / NRRL NRS-1264 / Gibson 46).